A 228-amino-acid chain; its full sequence is Uracil-DNA glycosylase (228 aa).

Residue Asp64 is the Proton acceptor of the active site.

Belongs to the uracil-DNA glycosylase (UDG) superfamily. UNG family.

The protein localises to the cytoplasm. The enzyme catalyses Hydrolyzes single-stranded DNA or mismatched double-stranded DNA and polynucleotides, releasing free uracil.. In terms of biological role, excises uracil residues from the DNA which can arise as a result of misincorporation of dUMP residues by DNA polymerase or due to deamination of cytosine. This is Uracil-DNA glycosylase from Yersinia pestis bv. Antiqua (strain Antiqua).